The primary structure comprises 120 residues: Phosphoribosyl-AMP cyclohydrolase (120 aa).

Asp-75 contacts Mg(2+). Cys-76 is a binding site for Zn(2+). Residues Asp-77 and Asp-79 each contribute to the Mg(2+) site. Positions 92 and 99 each coordinate Zn(2+).

Belongs to the PRA-CH family. Homodimer. Mg(2+) is required as a cofactor. Zn(2+) serves as cofactor.

The protein resides in the cytoplasm. It catalyses the reaction 1-(5-phospho-beta-D-ribosyl)-5'-AMP + H2O = 1-(5-phospho-beta-D-ribosyl)-5-[(5-phospho-beta-D-ribosylamino)methylideneamino]imidazole-4-carboxamide. The protein operates within amino-acid biosynthesis; L-histidine biosynthesis; L-histidine from 5-phospho-alpha-D-ribose 1-diphosphate: step 3/9. Catalyzes the hydrolysis of the adenine ring of phosphoribosyl-AMP. The polypeptide is Phosphoribosyl-AMP cyclohydrolase (Methanosarcina mazei (strain ATCC BAA-159 / DSM 3647 / Goe1 / Go1 / JCM 11833 / OCM 88) (Methanosarcina frisia)).